The following is a 345-amino-acid chain: UPF0324 membrane protein CTC_01844 (345 aa).

10 helical membrane-spanning segments follow: residues 7 to 24 (YSVG…SGFI), 28 to 50 (IPYR…NPIV), 70 to 87 (LAII…VLEV), 91 to 113 (SLIV…GKLF), 120 to 142 (SGLI…SPVI), 152 to 174 (AISA…GKYF), 181 to 203 (YGLW…YAFS), 209 to 231 (FSVI…FSYI), 261 to 283 (IFPW…IIPN), and 316 to 338 (SGFA…SFLV).

This sequence belongs to the UPF0324 family.

It is found in the cell membrane. The protein is UPF0324 membrane protein CTC_01844 of Clostridium tetani (strain Massachusetts / E88).